The primary structure comprises 149 residues: UPF0306 protein PM1958 (149 aa).

The protein belongs to the UPF0306 family.

The polypeptide is UPF0306 protein PM1958 (Pasteurella multocida (strain Pm70)).